A 199-amino-acid chain; its full sequence is Prolactin (199 aa).

C4 and C11 are oxidised to a cystine. At S26 the chain carries Phosphoserine. A glycan (N-linked (GlcNAc...) asparagine; partial) is linked at N31. 2 positions are modified to phosphoserine: S34 and S90. Cystine bridges form between C58–C174 and C191–C199.

This sequence belongs to the somatotropin/prolactin family. In terms of assembly, interacts with PRLR.

Its subcellular location is the secreted. Prolactin acts primarily on the mammary gland by promoting lactation. The chain is Prolactin (PRL) from Camelus dromedarius (Dromedary).